We begin with the raw amino-acid sequence, 1205 residues long: Nitric oxide synthase 3 (1205 aa).

The tract at residues 1–73 (MGNLKSVGQE…PPDGPKFPRV (73 aa)) is disordered. The N-myristoyl glycine moiety is linked to residue glycine 2. Residues cysteine 15 and cysteine 26 are each lipidated (S-palmitoyl cysteine). The span at 15 to 27 (CGLGLGLGLGLCG) shows a compositional bias: gly residues. A compositionally biased stretch (pro residues) spans 44 to 54 (LAPPPSPPPAP). Cysteine 96 and cysteine 101 together coordinate Zn(2+). The interaction with NOSIP stretch occupies residues 100 to 488 (RCLGSLVFPR…TDPWKGSASK (389 aa)). Residue serine 104 participates in (6R)-L-erythro-5,6,7,8-tetrahydrobiopterin binding. Serine 116 bears the Phosphoserine; by CDK5 mark. Cysteine 186 contributes to the heme b binding site. Glutamine 249, tryptophan 358, tyrosine 359, glutamate 363, and asparagine 368 together coordinate L-arginine. Residues alanine 448, tryptophan 449, and phenylalanine 462 each coordinate (6R)-L-erythro-5,6,7,8-tetrahydrobiopterin. Tyrosine 477 provides a ligand contact to heme b. The segment at 492–512 (VTRKKTFKEVANAVKISASLM) is calmodulin-binding. At threonine 497 the chain carries Phosphothreonine; by AMPK. Positions 522 to 705 (ATILYGSETG…AFGGWAQAAF (184 aa)) constitute a Flavodoxin-like domain. Residues serine 528, glutamate 529, threonine 530, arginine 532, serine 574, and threonine 575 each coordinate FMN. Phosphoserine occurs at positions 617, 635, and 640. Positions 656, 663, 689, and 693 each coordinate FMN. Residues 758–1004 (RKMVQATVLA…IRGAPSFRLP (247 aa)) form the FAD-binding FR-type domain. Arginine 778 contacts NADP(+). Histidine 800 contributes to the FAD binding site. A disordered region spans residues 819–850 (VEDPPPPGEPVAVEQLEKGSPGGPPPSWVRDP). Residue serine 838 is modified to Phosphoserine. FAD is bound by residues arginine 940, tyrosine 942, serine 943, threonine 958, alanine 960, tyrosine 964, valine 977, cysteine 978, and serine 979. Residues threonine 1018, arginine 1051, serine 1080, arginine 1081, lysine 1087, tyrosine 1089, and glutamine 1091 each contribute to the NADP(+) site. The residue at position 1177 (threonine 1177) is a Phosphothreonine. The residue at position 1179 (serine 1179) is a Phosphoserine; by AMPK. Serine 1181 bears the Phosphoserine mark.

The protein belongs to the NOS family. As to quaternary structure, homodimer. Interacts with NOSIP and NOSTRIN. Interacts with HSP90AB1. Forms a complex with ASL, ASS1 and SLC7A1; the complex regulates cell-autonomous L-arginine synthesis and citrulline recycling while channeling extracellular L-arginine to nitric oxide synthesis pathway. Heme b serves as cofactor. Requires FAD as cofactor. The cofactor is FMN. (6R)-L-erythro-5,6,7,8-tetrahydrobiopterin is required as a cofactor. Phosphorylation by AMPK at Ser-1179 in the presence of Ca(2+)-calmodulin (CaM) activates activity. In absence of Ca(2+)-calmodulin, AMPK also phosphorylates Thr-497, resulting in inhibition of activity. Phosphorylation of Ser-116 by CDK5 reduces activity.

Its subcellular location is the membrane. It localises to the caveola. The protein resides in the cytoplasm. The protein localises to the cytoskeleton. It is found in the golgi apparatus. Its subcellular location is the cell membrane. It carries out the reaction 2 L-arginine + 3 NADPH + 4 O2 + H(+) = 2 L-citrulline + 2 nitric oxide + 3 NADP(+) + 4 H2O. With respect to regulation, stimulated by calcium/calmodulin. Inhibited by NOSIP and NOSTRIN. In terms of biological role, produces nitric oxide (NO) which is implicated in vascular smooth muscle relaxation through a cGMP-mediated signal transduction pathway. NO mediates vascular endothelial growth factor (VEGF)-induced angiogenesis in coronary vessels and promotes blood clotting through the activation of platelets. The protein is Nitric oxide synthase 3 (NOS3) of Canis lupus familiaris (Dog).